The sequence spans 198 residues: Inner membrane-spanning protein YciB (198 aa).

Transmembrane regions (helical) follow at residues 36 to 56 (IFSATAMLIISSVVVYGILYL), 67 to 87 (LTLVACLVFGSLTLAFHSETF), 90 to 110 (WKAPVVNWLFAVAFAGSHFIG), 133 to 153 (LNIAWIVFFLFCGAANLYVAF), and 162 to 182 (FKVFGSLGMTLIFLVGQGIYL).

It belongs to the YciB family.

It localises to the cell inner membrane. Plays a role in cell envelope biogenesis, maintenance of cell envelope integrity and membrane homeostasis. This is Inner membrane-spanning protein YciB from Pseudomonas savastanoi pv. phaseolicola (strain 1448A / Race 6) (Pseudomonas syringae pv. phaseolicola (strain 1448A / Race 6)).